Reading from the N-terminus, the 257-residue chain is Thiazole synthase (257 aa).

Residue Lys-97 is the Schiff-base intermediate with DXP of the active site. 1-deoxy-D-xylulose 5-phosphate-binding positions include Gly-158, 184–185 (AG), and 206–207 (NT).

The protein belongs to the ThiG family. Homotetramer. Forms heterodimers with either ThiH or ThiS.

It localises to the cytoplasm. The enzyme catalyses [ThiS sulfur-carrier protein]-C-terminal-Gly-aminoethanethioate + 2-iminoacetate + 1-deoxy-D-xylulose 5-phosphate = [ThiS sulfur-carrier protein]-C-terminal Gly-Gly + 2-[(2R,5Z)-2-carboxy-4-methylthiazol-5(2H)-ylidene]ethyl phosphate + 2 H2O + H(+). It participates in cofactor biosynthesis; thiamine diphosphate biosynthesis. Functionally, catalyzes the rearrangement of 1-deoxy-D-xylulose 5-phosphate (DXP) to produce the thiazole phosphate moiety of thiamine. Sulfur is provided by the thiocarboxylate moiety of the carrier protein ThiS. In vitro, sulfur can be provided by H(2)S. The sequence is that of Thiazole synthase from Phocaeicola vulgatus (strain ATCC 8482 / DSM 1447 / JCM 5826 / CCUG 4940 / NBRC 14291 / NCTC 11154) (Bacteroides vulgatus).